Here is a 199-residue protein sequence, read N- to C-terminus: Holliday junction resolvase RecU (199 aa).

The Mg(2+) site is built by Thr-82, Asp-84, Glu-97, and Gln-116.

Belongs to the RecU family. Mg(2+) serves as cofactor.

The protein resides in the cytoplasm. It carries out the reaction Endonucleolytic cleavage at a junction such as a reciprocal single-stranded crossover between two homologous DNA duplexes (Holliday junction).. Endonuclease that resolves Holliday junction intermediates in genetic recombination. Cleaves mobile four-strand junctions by introducing symmetrical nicks in paired strands. Promotes annealing of linear ssDNA with homologous dsDNA. Required for DNA repair, homologous recombination and chromosome segregation. This is Holliday junction resolvase RecU from Streptococcus pyogenes serotype M1.